The primary structure comprises 301 residues: Nucleotide-binding protein Helmi_06460 (301 aa).

17-24 (GLSGAGKS) serves as a coordination point for ATP. 68–71 (DIRG) contributes to the GTP binding site.

It belongs to the RapZ-like family.

Functionally, displays ATPase and GTPase activities. This chain is Nucleotide-binding protein Helmi_06460, found in Heliobacterium modesticaldum (strain ATCC 51547 / Ice1).